A 71-amino-acid chain; its full sequence is Beta-defensin 9 (71 aa).

Residues Met1–Gly23 form the signal peptide. Disulfide bonds link Cys37-Cys66, Cys44-Cys59, and Cys49-Cys67.

Belongs to the beta-defensin family.

The protein localises to the secreted. In terms of biological role, has antibacterial activity. This is Beta-defensin 9 (Defb9) from Rattus norvegicus (Rat).